A 463-amino-acid chain; its full sequence is Succinate--CoA ligase [ADP-forming] subunit beta, mitochondrial (463 aa).

The transit peptide at 1–53 (MAASMFYGRQLAAAALRSHRPQTTLRAAAQVLGNSGLFNKHGLQVQQQQQRTL) directs the protein to the mitochondrion. An ATP-grasp domain is found at 61 to 288 (MELLQEAGVS…SNSAYRQKKI (228 aa)). The residue at position 78 (Lys-78) is an N6-acetyllysine. Position 84 is a phosphotyrosine (Tyr-84). Lys-88 is modified (N6-acetyllysine; alternate). An N6-succinyllysine; alternate modification is found at Lys-88. Residues Lys-98 and 105 to 107 (GRG) each bind ATP. N6-acetyllysine is present on residues Lys-129, Lys-139, Lys-143, and Lys-216. Mg(2+) is bound by residues Asn-258 and Asp-272. The residue at position 279 (Ser-279) is a Phosphoserine. Position 323 (Asn-323) interacts with substrate. Thr-341 is modified (phosphothreonine). Lys-368 bears the N6-acetyllysine mark. 380-382 (GIM) is a binding site for substrate. Lys-438 bears the N6-acetyllysine mark.

Belongs to the succinate/malate CoA ligase beta subunit family. ATP-specific subunit beta subfamily. In terms of assembly, heterodimer of an alpha and a beta subunit. The beta subunit determines specificity for ATP. Interacts with ALAS2. Mg(2+) serves as cofactor.

The protein resides in the mitochondrion. The enzyme catalyses succinate + ATP + CoA = succinyl-CoA + ADP + phosphate. It participates in carbohydrate metabolism; tricarboxylic acid cycle; succinate from succinyl-CoA (ligase route): step 1/1. Functionally, ATP-specific succinyl-CoA synthetase functions in the citric acid cycle (TCA), coupling the hydrolysis of succinyl-CoA to the synthesis of ATP and thus represents the only step of substrate-level phosphorylation in the TCA. The beta subunit provides nucleotide specificity of the enzyme and binds the substrate succinate, while the binding sites for coenzyme A and phosphate are found in the alpha subunit. The chain is Succinate--CoA ligase [ADP-forming] subunit beta, mitochondrial from Mus musculus (Mouse).